A 138-amino-acid chain; its full sequence is Large ribosomal subunit protein bL19 (138 aa).

It belongs to the bacterial ribosomal protein bL19 family.

This protein is located at the 30S-50S ribosomal subunit interface and may play a role in the structure and function of the aminoacyl-tRNA binding site. In Rickettsia typhi (strain ATCC VR-144 / Wilmington), this protein is Large ribosomal subunit protein bL19.